Reading from the N-terminus, the 280-residue chain is Thylakoid lumenal protein TL20.3, chloroplastic (280 aa).

The N-terminal 59 residues, 1 to 59 (MAFSSLSPLPMKSLDISRSSSSVSRSPYHFQRYLLRRLQLSSRSNLEIKDSSNTREGCC), are a transit peptide targeting the chloroplast. The N-terminal 31 residues, 60–90 (SSAESNTWKRILSAAMAAAVIASSSGVPAMA), are a transit peptide targeting the thylakoid. 2 consecutive Pentapeptide repeat domains span residues 124–163 (ENFR…NFSG) and 169–208 (TLMD…DFSD).

In terms of assembly, interacts with thioredoxin. Interacts in vitro with LTO1.

Its subcellular location is the plastid. The protein localises to the chloroplast thylakoid lumen. Its function is as follows. Pentapeptide repeat protein of unknown function. Subject to degradation when reduced. This is Thylakoid lumenal protein TL20.3, chloroplastic from Arabidopsis thaliana (Mouse-ear cress).